The following is a 125-amino-acid chain: Small ribosomal subunit protein uS13 (125 aa).

The segment at 92 to 125 (RHRRGLPVRGQRTRTNARTRKGKKKTVGAQAKKK) is disordered.

It belongs to the universal ribosomal protein uS13 family. As to quaternary structure, part of the 30S ribosomal subunit. Forms a loose heterodimer with protein S19. Forms two bridges to the 50S subunit in the 70S ribosome.

Located at the top of the head of the 30S subunit, it contacts several helices of the 16S rRNA. In the 70S ribosome it contacts the 23S rRNA (bridge B1a) and protein L5 of the 50S subunit (bridge B1b), connecting the 2 subunits; these bridges are implicated in subunit movement. Contacts the tRNAs in the A and P-sites. This is Small ribosomal subunit protein uS13 from Akkermansia muciniphila (strain ATCC BAA-835 / DSM 22959 / JCM 33894 / BCRC 81048 / CCUG 64013 / CIP 107961 / Muc).